The sequence spans 348 residues: Eukaryotic translation initiation factor 3 subunit H (348 aa).

Residues 1–25 are disordered; it reads MASRKEGSGAAGGGFGASKGKGKAA. Gly residues predominate over residues 9–19; it reads GAAGGGFGASK. Residues 35-169 enclose the MPN domain; the sequence is VQIDGLVVLK…LKAYRLTPKL (135 aa). Residues 266 to 285 are compositionally biased toward low complexity; it reads QQQQKHQYQQRRQQENLQRQ. Positions 266–304 are disordered; that stretch reads QQQQKHQYQQRRQQENLQRQSRGEAPLPEEDINKLFKPP.

It belongs to the eIF-3 subunit H family. Component of the eukaryotic translation initiation factor 3 (eIF-3) complex, which is composed of 13 subunits: EIF3A, EIF3B, EIF3C, EIF3D, EIF3E, EIF3F, EIF3G, EIF3H, EIF3I, EIF3J, EIF3K, EIF3L and EIF3M.

The protein resides in the cytoplasm. Functionally, component of the eukaryotic translation initiation factor 3 (eIF-3) complex, which is involved in protein synthesis of a specialized repertoire of mRNAs and, together with other initiation factors, stimulates binding of mRNA and methionyl-tRNAi to the 40S ribosome. The eIF-3 complex specifically targets and initiates translation of a subset of mRNAs involved in cell proliferation. In Gallus gallus (Chicken), this protein is Eukaryotic translation initiation factor 3 subunit H.